The sequence spans 409 residues: Tyrosine--tRNA ligase (409 aa).

Tyr39 contacts L-tyrosine. Positions 44 to 53 match the 'HIGH' region motif; sequence PTAPSLHVGS. L-tyrosine contacts are provided by Tyr176 and Gln180. Residues 236 to 240 carry the 'KMSKS' region motif; the sequence is KMGKT. Lys239 lines the ATP pocket. Residues 346–409 form the S4 RNA-binding domain; sequence IGIVDALVGL…KKKHGILRKA (64 aa).

It belongs to the class-I aminoacyl-tRNA synthetase family. TyrS type 1 subfamily. In terms of assembly, homodimer.

The protein localises to the cytoplasm. The catalysed reaction is tRNA(Tyr) + L-tyrosine + ATP = L-tyrosyl-tRNA(Tyr) + AMP + diphosphate + H(+). Functionally, catalyzes the attachment of tyrosine to tRNA(Tyr) in a two-step reaction: tyrosine is first activated by ATP to form Tyr-AMP and then transferred to the acceptor end of tRNA(Tyr). The protein is Tyrosine--tRNA ligase of Novosphingobium aromaticivorans (strain ATCC 700278 / DSM 12444 / CCUG 56034 / CIP 105152 / NBRC 16084 / F199).